Reading from the N-terminus, the 716-residue chain is Zinc finger protein 840 (716 aa).

One can recognise a KRAB domain in the interval 42 to 113; the sequence is VRFRDVAVVF…EREVTGDPCP (72 aa). 18 consecutive C2H2-type zinc fingers follow at residues 151–173, 207–229, 235–257, 277–299, 305–327, 333–355, 361–383, 389–411, 417–439, 445–467, 473–495, 501–523, 549–571, 577–599, 605–627, 633–655, 661–683, and 689–711; these read YECDDCGMAFGHVSQLTGHQKIH, FECNQCGETFNRPSKVIQHQSMH, YKCDVCQKAFRFLSSLSIHQRFH, FSCNFCGKTFHRFSEKTQHLLIH, YTCNYCKKEFNPYSKFILHQRTH, HKCDVCEKSFKSISNLNKHQKTH, FSCNECKKTFAQRTDLARHQQIH, FICSSCKKTFVRLSDLTQHKGTH, YQCTTCEKAFKYRSNFTKHQKTH, FACNECGKTYRLNWELNQHKKIH, YECGECGKRFNNNSNLNKHKKIH, FVCNQCGKAFSLNSKLSRHQRTH, FPCNECKKAFAQRMDLARHQQIH, YQCTTCEKAFKYQSNFTKHQKTH, FTCNECGKTFRLNWKLNQHKKIH, YECGECGKCFNNNSNLSKHKKIH, and FVCNQCGKAFSLNSKLSRHQITH. Residues 515 to 548 form a disordered region; it reads KLSRHQRTHNKKENSSKSVSNLNKHQKTHAGEKP.

It belongs to the krueppel C2H2-type zinc-finger protein family.

Its subcellular location is the nucleus. Its function is as follows. May be involved in transcriptional regulation. The polypeptide is Zinc finger protein 840 (ZNF840P) (Homo sapiens (Human)).